Reading from the N-terminus, the 298-residue chain is Protoheme IX farnesyltransferase (298 aa).

9 helical membrane-spanning segments follow: residues 26–46, 52–72, 93–113, 120–140, 148–168, 174–194, 219–239, 241–261, and 278–298; these read VVSL…PGAV, LLGT…NCLV, VSVP…LFIL, LTMW…TVIL, IVIG…AITG, ALLL…ALAL, LHVL…YLTQ, SGLI…YYAI, and YSII…YFYF.

Belongs to the UbiA prenyltransferase family. Protoheme IX farnesyltransferase subfamily.

The protein localises to the cell inner membrane. The enzyme catalyses heme b + (2E,6E)-farnesyl diphosphate + H2O = Fe(II)-heme o + diphosphate. It participates in porphyrin-containing compound metabolism; heme O biosynthesis; heme O from protoheme: step 1/1. Its function is as follows. Converts heme B (protoheme IX) to heme O by substitution of the vinyl group on carbon 2 of heme B porphyrin ring with a hydroxyethyl farnesyl side group. In Nitrosomonas eutropha (strain DSM 101675 / C91 / Nm57), this protein is Protoheme IX farnesyltransferase.